We begin with the raw amino-acid sequence, 4644 residues long: Cytoplasmic dynein 1 heavy chain 1 (4644 aa).

Residue Ser2 is modified to N-acetylserine. The stem stretch occupies residues 2–1865 (SETGGGEDGS…SIQMANAKFN (1864 aa)). 4 coiled-coil regions span residues 48-69 (AALE…FLSD), 179-200 (SVEK…NIEI), 453-476 (AHRK…QLRA), and 541-564 (TEAW…RITA). Position 68 is a phosphoserine (Ser68). The segment at 446 to 701 (MVWRINPAHR…NTQEIFDDWA (256 aa)) is interaction with DYNC1I2. An interaction with DYNC1LI2 region spans residues 649–800 (AKQIDRQLTA…EKVEERNTIS (152 aa)). The residue at position 1123 (Lys1123) is an N6-acetyllysine. A coiled-coil region spans residues 1169 to 1201 (TYVQSLKRKIKQFEKQVELYRNGQRLLEKQRFQ). A Phosphoserine modification is found at Ser1228. Coiled coils occupy residues 1229-1250 (AIQQ…AVES) and 1355-1371 (RKLR…LKNF). 4 AAA regions span residues 1866–2097 (YGFE…VLVS), 2178–2450 (EELK…LTRL), 2554–2803 (EVET…WVRG), and 2897–3166 (VFYE…GGRT). ATP-binding positions include 1904–1911 (GPAGTGKT) and 2222–2229 (GPSGSGKS). The tract at residues 2389–2409 (EDEAQRRRKGKEDEGEEAASP) is disordered. ATP is bound by residues 2593–2600 (GPPGSGKT) and 2935–2942 (GVSGAGKT). Coiled coils occupy residues 3187–3273 (EKRS…ADKQ), 3394–3498 (AIAQ…KNQM), and 3735–3798 (EFQL…VSQQ). The tract at residues 3187-3498 (EKRSELEEQQ…KTSETFKNQM (312 aa)) is stalk. Lys3478 carries the post-translational modification N6-acetyllysine. AAA stretches follow at residues 3551–3780 (LSNA…EVTR) and 4003–4219 (AHMF…TVDT). Ser4160 carries the phosphoserine modification. The residue at position 4281 (Lys4281) is an N6-acetyllysine. Residue Thr4364 is modified to Phosphothreonine.

Belongs to the dynein heavy chain family. In terms of assembly, homodimer. The cytoplasmic dynein 1 complex consists of two catalytic heavy chains (HCs) and a number of non-catalytic subunits presented by intermediate chains (ICs), light intermediate chains (LICs) and light chains (LCs); the composition seems to vary in respect to the IC, LIC and LC composition. The heavy chain homodimer serves as a scaffold for the probable homodimeric assembly of the respective non-catalytic subunits. The ICs and LICs bind directly to the HC dimer and dynein LCs assemble on the IC dimer. Interacts with DYNC1LI1; DYNC1LI1 and DYNC1LI2 bind mutually exclusive to DYNC1H1. Interacts with DYNC1LI2; DYNC1LI1 and DYNC1LI2 bind mutually exclusive to DYNC1H1. Interacts with DYNC1I2. Interacts with BICD2. Interacts with DNALI1.

Its subcellular location is the cytoplasm. The protein resides in the cytoskeleton. In terms of biological role, cytoplasmic dynein 1 acts as a motor for the intracellular retrograde motility of vesicles and organelles along microtubules. Dynein has ATPase activity; the force-producing power stroke is thought to occur on release of ADP. Plays a role in mitotic spindle assembly and metaphase plate congression. This Rattus norvegicus (Rat) protein is Cytoplasmic dynein 1 heavy chain 1 (Dync1h1).